The chain runs to 226 residues: ATP synthase F(0) complex subunit a (226 aa).

Transmembrane regions (helical) follow at residues 12 to 32 (PTMM…ILFP), 68 to 88 (WALM…LGLL), 97 to 117 (QLSM…ITGF), 138 to 158 (IPML…ALAV), 164 to 184 (ITAG…LMDI), and 189 to 209 (AFIT…VALI).

It belongs to the ATPase A chain family. As to quaternary structure, component of the ATP synthase complex composed at least of ATP5F1A/subunit alpha, ATP5F1B/subunit beta, ATP5MC1/subunit c (homooctomer), MT-ATP6/subunit a, MT-ATP8/subunit 8, ATP5ME/subunit e, ATP5MF/subunit f, ATP5MG/subunit g, ATP5MK/subunit k, ATP5MJ/subunit j, ATP5F1C/subunit gamma, ATP5F1D/subunit delta, ATP5F1E/subunit epsilon, ATP5PF/subunit F6, ATP5PB/subunit b, ATP5PD/subunit d, ATP5PO/subunit OSCP. ATP synthase complex consists of a soluble F(1) head domain (subunits alpha(3) and beta(3)) - the catalytic core - and a membrane F(0) domain - the membrane proton channel (subunits c, a, 8, e, f, g, k and j). These two domains are linked by a central stalk (subunits gamma, delta, and epsilon) rotating inside the F1 region and a stationary peripheral stalk (subunits F6, b, d, and OSCP). Interacts with DNAJC30; interaction is direct.

It is found in the mitochondrion inner membrane. It catalyses the reaction H(+)(in) = H(+)(out). In terms of biological role, subunit a, of the mitochondrial membrane ATP synthase complex (F(1)F(0) ATP synthase or Complex V) that produces ATP from ADP in the presence of a proton gradient across the membrane which is generated by electron transport complexes of the respiratory chain. ATP synthase complex consist of a soluble F(1) head domain - the catalytic core - and a membrane F(1) domain - the membrane proton channel. These two domains are linked by a central stalk rotating inside the F(1) region and a stationary peripheral stalk. During catalysis, ATP synthesis in the catalytic domain of F(1) is coupled via a rotary mechanism of the central stalk subunits to proton translocation. With the subunit c (ATP5MC1), forms the proton-conducting channel in the F(0) domain, that contains two crucial half-channels (inlet and outlet) that facilitate proton movement from the mitochondrial intermembrane space (IMS) into the matrix. Protons are taken up via the inlet half-channel and released through the outlet half-channel, following a Grotthuss mechanism. The protein is ATP synthase F(0) complex subunit a of Halichoerus grypus (Gray seal).